Reading from the N-terminus, the 1128-residue chain is Lysylphosphatidylglycerol biosynthesis bifunctional protein LysX (1128 aa).

The segment at M1–R47 is disordered. The phosphatidylglycerol lysyltransferase stretch occupies residues M1–D632. 6 consecutive transmembrane segments (helical) span residues V55–L75, A97–S117, I121–F141, I147–W167, G184–F204, and F240–L260. Positions D619–R644 are disordered. The interval W633–R1128 is lysine--tRNA ligase. Basic and acidic residues predominate over residues P634–R644. Mg(2+)-binding residues include D1040 and E1047.

In the N-terminal section; belongs to the LPG synthetase family. The protein in the C-terminal section; belongs to the class-II aminoacyl-tRNA synthetase family. Mg(2+) serves as cofactor.

The protein resides in the cell membrane. The catalysed reaction is tRNA(Lys) + L-lysine + ATP = L-lysyl-tRNA(Lys) + AMP + diphosphate. The enzyme catalyses L-lysyl-tRNA(Lys) + a 1,2-diacyl-sn-glycero-3-phospho-(1'-sn-glycerol) = a 1,2-diacyl-sn-glycero-3-phospho-1'-(3'-O-L-lysyl)-sn-glycerol + tRNA(Lys). In terms of biological role, catalyzes the production of L-lysyl-tRNA(Lys)transfer and the transfer of a lysyl group from L-lysyl-tRNA(Lys) to membrane-bound phosphatidylglycerol (PG), which produces lysylphosphatidylglycerol (LPG), one of the components of the bacterial membrane with a positive net charge. LPG synthesis contributes to the resistance to cationic antimicrobial peptides (CAMPs) and likely protects M.tuberculosis against the CAMPs produced by competiting microorganisms (bacteriocins). In fact, the modification of anionic phosphatidylglycerol with positively charged L-lysine results in repulsion of the peptides. This chain is Lysylphosphatidylglycerol biosynthesis bifunctional protein LysX (lysX), found in Nocardia farcinica (strain IFM 10152).